The chain runs to 383 residues: Succinyl-diaminopimelate desuccinylase (383 aa).

Position 74 (His-74) interacts with Zn(2+). Residue Asp-76 is part of the active site. A Zn(2+)-binding site is contributed by Asp-107. The active-site Proton acceptor is the Glu-141. Glu-142, Glu-170, and His-356 together coordinate Zn(2+).

The protein belongs to the peptidase M20A family. DapE subfamily. As to quaternary structure, homodimer. The cofactor is Zn(2+). It depends on Co(2+) as a cofactor.

The enzyme catalyses N-succinyl-(2S,6S)-2,6-diaminopimelate + H2O = (2S,6S)-2,6-diaminopimelate + succinate. It functions in the pathway amino-acid biosynthesis; L-lysine biosynthesis via DAP pathway; LL-2,6-diaminopimelate from (S)-tetrahydrodipicolinate (succinylase route): step 3/3. In terms of biological role, catalyzes the hydrolysis of N-succinyl-L,L-diaminopimelic acid (SDAP), forming succinate and LL-2,6-diaminopimelate (DAP), an intermediate involved in the bacterial biosynthesis of lysine and meso-diaminopimelic acid, an essential component of bacterial cell walls. This chain is Succinyl-diaminopimelate desuccinylase, found in Cupriavidus taiwanensis (strain DSM 17343 / BCRC 17206 / CCUG 44338 / CIP 107171 / LMG 19424 / R1) (Ralstonia taiwanensis (strain LMG 19424)).